Here is a 506-residue protein sequence, read N- to C-terminus: Notoamide biosynthesis cluster transcriptional coactivator notQ' (506 aa).

The segment at residues C11 to C38 is a DNA-binding region (zn(2)-C6 fungal-type). Residues G73 to P102 form a disordered region. Over residues L75 to A84 the composition is skewed to polar residues.

Its subcellular location is the nucleus. Transcription factor that probably regulates the expression of the gene cluster that mediates the biosynthesis of notoamide, a fungal indole alkaloid that belongs to a family of natural products containing a characteristic bicyclo[2.2.2]diazaoctane core. The sequence is that of Notoamide biosynthesis cluster transcriptional coactivator notQ' from Aspergillus versicolor.